We begin with the raw amino-acid sequence, 194 residues long: MRLCDTDIERYLDEGIIEIIPRPSNEKITGATVDVRLGNSFRVFREHATPYIDLSGPREEVTAQLHKVMSEEIIIADGEAFFLHPGELALATTLESVTLPDNVVGWLDGRSSLARLGLMVHVTAHRIDPGWQGKIVLEFFNAGKLPLALRPNMAIGALSFEILSGHAAKPYNARKDAKYKNQQSAVSSRINQDD.

Residues 110 to 115 (RSSLAR), aspartate 128, 136 to 138 (VLE), tyrosine 171, lysine 178, and glutamine 182 contribute to the dCTP site. Glutamate 138 (proton donor/acceptor) is an active-site residue. The segment at 175–194 (KDAKYKNQQSAVSSRINQDD) is disordered. The segment covering 180 to 194 (KNQQSAVSSRINQDD) has biased composition (polar residues).

Belongs to the dCTP deaminase family. In terms of assembly, homotrimer.

It carries out the reaction dCTP + H2O + H(+) = dUTP + NH4(+). It participates in pyrimidine metabolism; dUMP biosynthesis; dUMP from dCTP (dUTP route): step 1/2. Functionally, catalyzes the deamination of dCTP to dUTP. This is dCTP deaminase from Actinobacillus pleuropneumoniae serotype 5b (strain L20).